The sequence spans 219 residues: MSLLVKICGLTTPETLGAALDAGAEMVGFVFFPPSPRHVGLTAARELGQQAKGRALKVALTVDADDATFENIVETLRPDLLQLHGRESVARIRDLKQRFGLPVMKAIAVATTADLVPLAGYADVCDRILFDARAPKDATRPGGLGATFDWHVLDALALDRPFMVSGGLSADNVAEAVRITRAGGVDVSSGVERAPGVKDCDMIRNFIRAARAAEELSVQ.

The protein belongs to the TrpF family.

It carries out the reaction N-(5-phospho-beta-D-ribosyl)anthranilate = 1-(2-carboxyphenylamino)-1-deoxy-D-ribulose 5-phosphate. The protein operates within amino-acid biosynthesis; L-tryptophan biosynthesis; L-tryptophan from chorismate: step 3/5. The polypeptide is N-(5'-phosphoribosyl)anthranilate isomerase (Bradyrhizobium sp. (strain BTAi1 / ATCC BAA-1182)).